We begin with the raw amino-acid sequence, 375 residues long: Growth/differentiation factor 8 (375 aa).

The N-terminal stretch at 1 to 18 (MQKLQISVYIYLFMLIVA) is a signal peptide. The propeptide occupies 19–266 (GPVDLNENSE…VTDTPKRSRR (248 aa)). N-linked (GlcNAc...) asparagine glycosylation is found at Asn-47 and Asn-71. 4 cysteine pairs are disulfide-bonded: Cys-272–Cys-282, Cys-281–Cys-340, Cys-309–Cys-372, and Cys-313–Cys-374.

It belongs to the TGF-beta family. As to quaternary structure, homodimer; disulfide-linked. Interacts with WFIKKN2, leading to inhibit its activity. Interacts with FSTL3. Synthesized as large precursor molecule that undergoes proteolytic cleavage to generate an N-terminal propeptide and a disulfide linked C-terminal dimer, which is the biologically active molecule. The circulating form consists of a latent complex of the C-terminal dimer and other proteins, including its propeptide, which maintain the C-terminal dimer in a latent, inactive state. Ligand activation requires additional cleavage of the prodomain by a tolloid-like metalloproteinase.

It localises to the secreted. Functionally, acts specifically as a negative regulator of skeletal muscle growth. This is Growth/differentiation factor 8 (MSTN) from Bubalus bubalis (Domestic water buffalo).